The primary structure comprises 1107 residues: Membrane-associated guanylate kinase, WW and PDZ domain-containing protein 3 (1107 aa).

Residues 17-102 (ECGLSGVGGD…PIRLKTVKPG (86 aa)) form the PDZ 1 domain. The 175-residue stretch at 110-284 (RHYLSLQFQK…SMDFRNYLTR (175 aa)) folds into the Guanylate kinase-like domain. 117–124 (FQKGSIDH) is an ATP binding site. Residues 210–277 (FDTETQRKRT…SYNQTNSSMD (68 aa)) form a disordered region. A compositionally biased stretch (polar residues) spans 220–231 (TSVSKMQRTDSS). Over residues 232-241 (LPEEEDEEER) the composition is skewed to acidic residues. Over residues 251-261 (TDHRDRQEPSE) the composition is skewed to basic and acidic residues. Polar residues predominate over residues 267 to 277 (PSYNQTNSSMD). WW domains follow at residues 289-322 (EPLPKNWEMAYTEAGMIYFIDHNTKTTTWLDPRL) and 335-368 (GELPYGWEKIEDPQYGTYYVDHINQKTQFDNPVL). Positions 374–398 (KQLNPAPSEGTVHQEPENSQFTRDP) are disordered. PDZ domains follow at residues 407–489 (HTSL…TLCR), 577–653 (TIPL…LILR), 727–809 (DVFL…TVRR), and 853–940 (DVIL…IAEE). The segment at 941-975 (EHRGPPSGSNSARQSPAPQHRPMGQTQPTYGTLDR) is disordered. A compositionally biased stretch (polar residues) spans 947–957 (SGSNSARQSPA). The region spanning 1003 to 1085 (PVELERGPRG…KVLLLLRPGT (83 aa)) is the PDZ 6 domain.

This sequence belongs to the MAGUK family.

It localises to the cell membrane. The protein resides in the cell junction. It is found in the tight junction. Functionally, acts as a scaffolding protein at cell-cell junctions, thereby regulating various cellular and signaling processes. This Xenopus tropicalis (Western clawed frog) protein is Membrane-associated guanylate kinase, WW and PDZ domain-containing protein 3 (magi3).